Consider the following 326-residue polypeptide: tRNA U34 carboxymethyltransferase (326 aa).

Carboxy-S-adenosyl-L-methionine is bound by residues Lys-95, Trp-109, Lys-114, Gly-134, 184 to 185 (VE), Tyr-204, and Arg-319.

This sequence belongs to the class I-like SAM-binding methyltransferase superfamily. CmoB family.

The catalysed reaction is carboxy-S-adenosyl-L-methionine + 5-hydroxyuridine(34) in tRNA = 5-carboxymethoxyuridine(34) in tRNA + S-adenosyl-L-homocysteine + H(+). Functionally, catalyzes carboxymethyl transfer from carboxy-S-adenosyl-L-methionine (Cx-SAM) to 5-hydroxyuridine (ho5U) to form 5-carboxymethoxyuridine (cmo5U) at position 34 in tRNAs. This Trichodesmium erythraeum (strain IMS101) protein is tRNA U34 carboxymethyltransferase.